A 482-amino-acid polypeptide reads, in one-letter code: Adenylyltransferase and sulfurtransferase uba4 (482 aa).

ATP-binding positions include Gly-93, Asp-114, 121-125, Lys-138, and 182-183; these read SNLHR and DN. Positions 231 and 234 each coordinate Zn(2+). Residue Cys-248 is the Glycyl thioester intermediate; for adenylyltransferase activity of the active site. Zn(2+) contacts are provided by Cys-309 and Cys-312. Residues 362–480 form the Rhodanese domain; the sequence is EEKEPTIIDV…WKEQVDPEWP (119 aa). Cys-435 functions as the Cysteine persulfide intermediate; for sulfurtransferase activity in the catalytic mechanism.

The protein in the N-terminal section; belongs to the HesA/MoeB/ThiF family. UBA4 subfamily. Zn(2+) serves as cofactor.

It localises to the cytoplasm. It is found in the cytosol. It catalyses the reaction [molybdopterin-synthase sulfur-carrier protein]-C-terminal Gly-Gly + ATP + H(+) = [molybdopterin-synthase sulfur-carrier protein]-C-terminal Gly-Gly-AMP + diphosphate. The enzyme catalyses [molybdopterin-synthase sulfur-carrier protein]-C-terminal Gly-Gly-AMP + S-sulfanyl-L-cysteinyl-[cysteine desulfurase] + AH2 = [molybdopterin-synthase sulfur-carrier protein]-C-terminal-Gly-aminoethanethioate + L-cysteinyl-[cysteine desulfurase] + A + AMP + 2 H(+). It participates in tRNA modification; 5-methoxycarbonylmethyl-2-thiouridine-tRNA biosynthesis. Its pathway is cofactor biosynthesis; molybdopterin biosynthesis. In terms of biological role, plays a central role in 2-thiolation of mcm(5)S(2)U at tRNA wobble positions of cytosolic tRNA(Lys), tRNA(Glu) and tRNA(Gln). Also essential during biosynthesis of the molybdenum cofactor. Acts by mediating the C-terminal thiocarboxylation of sulfur carriers urm1 and mocs2a. Its N-terminus first activates urm1 and mocs2a as acyl-adenylates (-COAMP), then the persulfide sulfur on the catalytic cysteine is transferred to urm1 and mocs2a to form thiocarboxylation (-COSH) of their C-terminus. The reaction probably involves hydrogen sulfide that is generated from the persulfide intermediate and that acts as a nucleophile towards urm1 and mocs2a. Subsequently, a transient disulfide bond is formed. Does not use thiosulfate as sulfur donor; nfs1 probably acting as a sulfur donor for thiocarboxylation reactions. The protein is Adenylyltransferase and sulfurtransferase uba4 of Aspergillus niger (strain ATCC MYA-4892 / CBS 513.88 / FGSC A1513).